Here is a 727-residue protein sequence, read N- to C-terminus: Glycerol-3-phosphate dehydrogenase, mitochondrial (727 aa).

The transit peptide at 1-42 (MAFQKAVKGTILVGGGALATVLGLSPFAHYRRKQVSLAYVEA) directs the protein to the mitochondrion. 71–99 (DILVIGGGATGCGCALDAVTRGLKTALVE) contributes to the FAD binding site. Position 601 is a phosphotyrosine (tyrosine 601). EF-hand domains lie at 623 to 658 (SDID…INVQ) and 659 to 694 (MDEN…VQKG). Residues aspartate 672, asparagine 674, asparagine 676, glutamine 678, and glutamate 683 each contribute to the Ca(2+) site.

Belongs to the FAD-dependent glycerol-3-phosphate dehydrogenase family. Requires FAD as cofactor.

The protein resides in the mitochondrion inner membrane. It catalyses the reaction a quinone + sn-glycerol 3-phosphate = dihydroxyacetone phosphate + a quinol. It participates in polyol metabolism; glycerol degradation via glycerol kinase pathway; glycerone phosphate from sn-glycerol 3-phosphate (anaerobic route): step 1/1. Calcium-binding enhance the activity of the enzyme. In terms of biological role, calcium-responsive mitochondrial glycerol-3-phosphate dehydrogenase which seems to be a key component of the pancreatic beta-cell glucose-sensing device. In Mus musculus (Mouse), this protein is Glycerol-3-phosphate dehydrogenase, mitochondrial.